We begin with the raw amino-acid sequence, 441 residues long: Tol-Pal system protein TolB (441 aa).

The signal sequence occupies residues 1-25 (MRIFFFAYVLPTVISLLLGCQGAIA).

It belongs to the TolB family. In terms of assembly, the Tol-Pal system is composed of five core proteins: the inner membrane proteins TolA, TolQ and TolR, the periplasmic protein TolB and the outer membrane protein Pal. They form a network linking the inner and outer membranes and the peptidoglycan layer.

It is found in the periplasm. Part of the Tol-Pal system, which plays a role in outer membrane invagination during cell division and is important for maintaining outer membrane integrity. The sequence is that of Tol-Pal system protein TolB from Anaplasma marginale (strain St. Maries).